Reading from the N-terminus, the 275-residue chain is L-aspartate dehydrogenase (275 aa).

Residues Ala130 and Asn196 each coordinate NAD(+). The active site involves His226.

The protein belongs to the L-aspartate dehydrogenase family.

It catalyses the reaction L-aspartate + NADP(+) + H2O = oxaloacetate + NH4(+) + NADPH + H(+). It carries out the reaction L-aspartate + NAD(+) + H2O = oxaloacetate + NH4(+) + NADH + H(+). It participates in cofactor biosynthesis; NAD(+) biosynthesis; iminoaspartate from L-aspartate (dehydrogenase route): step 1/1. Its function is as follows. Specifically catalyzes the NAD or NADP-dependent dehydrogenation of L-aspartate to iminoaspartate. This is L-aspartate dehydrogenase from Ruegeria pomeroyi (strain ATCC 700808 / DSM 15171 / DSS-3) (Silicibacter pomeroyi).